The sequence spans 154 residues: MTTTTTFKGVDPNSRNSSRVLRPPGGGSNFSLGFDEPTEQPVRRNKMASSIFGTPEENPPSWAKSAGAKSSGGREDAESSGPQRRNSSEANSGDFLDLKGEGDVHENVDTDLQASLGQSEEKPVPAAPVPSPVAPAPVPSRRNPPGGKSSLVLG.

At Met-1 the chain carries N-acetylmethionine. Polar residues predominate over residues Met-1–Arg-19. The interval Met-1–Gly-154 is disordered. An N-acetylthreonine; in Hematological and neurological expressed 1 protein, N-terminally processed modification is found at Thr-2. Ser-28 and Ser-31 each carry phosphoserine. Thr-54 bears the Phosphothreonine mark. Phosphoserine is present on residues Ser-71, Ser-80, Ser-87, Ser-88, and Ser-92. A compositionally biased stretch (polar residues) spans Ser-80 to Asn-91. The segment covering Leu-96–Val-108 has biased composition (basic and acidic residues). The span at Pro-125 to Val-138 shows a compositional bias: pro residues. Ser-131 carries the phosphoserine modification. Lys-148 is modified (N6-acetyllysine).

The protein belongs to the JUPITER family. In terms of assembly, interacts with the complex composed, at least, of APC, CTNNB1 and GSK3B; the interaction takes place with the inactive form of GSK3B (phosphorylated at 'Ser-9').

Its subcellular location is the nucleus. The protein resides in the cytoplasm. Its function is as follows. Modulates negatively AKT-mediated GSK3B signaling. Induces CTNNB1 'Ser-33' phosphorylation and degradation through the suppression of the inhibitory 'Ser-9' phosphorylation of GSK3B, which represses the function of the APC:CTNNB1:GSK3B complex and the interaction with CDH1/E-cadherin in adherent junctions. Plays a role in the regulation of cell cycle and cell adhesion. Has an inhibitory role on AR-signaling pathway through the induction of receptor proteasomal degradation. This is Jupiter microtubule associated homolog 1 from Bos taurus (Bovine).